The sequence spans 283 residues: Pantothenate synthetase (283 aa).

ATP is bound at residue 30-37; that stretch reads MGALHEGH. Catalysis depends on histidine 37, which acts as the Proton donor. Glutamine 61 contributes to the (R)-pantoate binding site. Glutamine 61 contributes to the beta-alanine binding site. Position 147–150 (147–150) interacts with ATP; it reads GEKD. Glutamine 153 is a binding site for (R)-pantoate. ATP-binding positions include isoleucine 176 and 184–187; that span reads VSSR.

This sequence belongs to the pantothenate synthetase family. Homodimer.

The protein resides in the cytoplasm. It carries out the reaction (R)-pantoate + beta-alanine + ATP = (R)-pantothenate + AMP + diphosphate + H(+). The protein operates within cofactor biosynthesis; (R)-pantothenate biosynthesis; (R)-pantothenate from (R)-pantoate and beta-alanine: step 1/1. In terms of biological role, catalyzes the condensation of pantoate with beta-alanine in an ATP-dependent reaction via a pantoyl-adenylate intermediate. The chain is Pantothenate synthetase from Chlorobium phaeobacteroides (strain DSM 266 / SMG 266 / 2430).